A 228-amino-acid polypeptide reads, in one-letter code: UPF0173 metal-dependent hydrolase ABC2731 (228 aa).

It belongs to the UPF0173 family.

This chain is UPF0173 metal-dependent hydrolase ABC2731, found in Shouchella clausii (strain KSM-K16) (Alkalihalobacillus clausii).